The following is a 307-amino-acid chain: tRNA-cytidine(32) 2-sulfurtransferase (307 aa).

A PP-loop motif motif is present at residues 44–49 (SGGKDS). 3 residues coordinate [4Fe-4S] cluster: C119, C122, and C210.

The protein belongs to the TtcA family. In terms of assembly, homodimer. The cofactor is Mg(2+). Requires [4Fe-4S] cluster as cofactor.

Its subcellular location is the cytoplasm. It catalyses the reaction cytidine(32) in tRNA + S-sulfanyl-L-cysteinyl-[cysteine desulfurase] + AH2 + ATP = 2-thiocytidine(32) in tRNA + L-cysteinyl-[cysteine desulfurase] + A + AMP + diphosphate + H(+). It participates in tRNA modification. Its function is as follows. Catalyzes the ATP-dependent 2-thiolation of cytidine in position 32 of tRNA, to form 2-thiocytidine (s(2)C32). The sulfur atoms are provided by the cysteine/cysteine desulfurase (IscS) system. This Aliivibrio fischeri (strain ATCC 700601 / ES114) (Vibrio fischeri) protein is tRNA-cytidine(32) 2-sulfurtransferase.